The primary structure comprises 628 residues: Beta-galactosidase large subunit (628 aa).

Glu-468 serves as the catalytic Proton donor. Glu-536 functions as the Nucleophile in the catalytic mechanism.

It belongs to the glycosyl hydrolase 2 family. As to quaternary structure, heterodimer of a large (LacL) and a small subunit (LacM).

The enzyme catalyses Hydrolysis of terminal non-reducing beta-D-galactose residues in beta-D-galactosides.. In terms of biological role, component of a beta-galactosidase. The protein is Beta-galactosidase large subunit of Lactobacillus helveticus (Lactobacillus suntoryeus).